Here is an 807-residue protein sequence, read N- to C-terminus: Glycerol-3-phosphate acyltransferase (807 aa).

The HXXXXD motif motif lies at 308-313 (CHRSHM).

Belongs to the GPAT/DAPAT family.

The protein resides in the cell inner membrane. The enzyme catalyses sn-glycerol 3-phosphate + an acyl-CoA = a 1-acyl-sn-glycero-3-phosphate + CoA. It participates in phospholipid metabolism; CDP-diacylglycerol biosynthesis; CDP-diacylglycerol from sn-glycerol 3-phosphate: step 1/3. This is Glycerol-3-phosphate acyltransferase from Shewanella pealeana (strain ATCC 700345 / ANG-SQ1).